A 296-amino-acid polypeptide reads, in one-letter code: Acetylglutamate kinase (296 aa).

Residues 69–70 (GG), arginine 91, and asparagine 193 each bind substrate.

This sequence belongs to the acetylglutamate kinase family. ArgB subfamily.

It is found in the cytoplasm. The enzyme catalyses N-acetyl-L-glutamate + ATP = N-acetyl-L-glutamyl 5-phosphate + ADP. It functions in the pathway amino-acid biosynthesis; L-arginine biosynthesis; N(2)-acetyl-L-ornithine from L-glutamate: step 2/4. Its function is as follows. Catalyzes the ATP-dependent phosphorylation of N-acetyl-L-glutamate. The protein is Acetylglutamate kinase of Paracidovorax citrulli (strain AAC00-1) (Acidovorax citrulli).